We begin with the raw amino-acid sequence, 182 residues long: Large ribosomal subunit protein uL5 (182 aa).

This sequence belongs to the universal ribosomal protein uL5 family. As to quaternary structure, part of the 50S ribosomal subunit; part of the 5S rRNA/L5/L18/L25 subcomplex. Contacts the 5S rRNA and the P site tRNA. Forms a bridge to the 30S subunit in the 70S ribosome.

Its function is as follows. This is one of the proteins that bind and probably mediate the attachment of the 5S RNA into the large ribosomal subunit, where it forms part of the central protuberance. In the 70S ribosome it contacts protein S13 of the 30S subunit (bridge B1b), connecting the 2 subunits; this bridge is implicated in subunit movement. Contacts the P site tRNA; the 5S rRNA and some of its associated proteins might help stabilize positioning of ribosome-bound tRNAs. This is Large ribosomal subunit protein uL5 from Borreliella burgdorferi (strain ATCC 35210 / DSM 4680 / CIP 102532 / B31) (Borrelia burgdorferi).